Reading from the N-terminus, the 552-residue chain is Putative transport protein YE4162 (552 aa).

6 consecutive transmembrane segments (helical) span residues 1-21, 26-46, 65-85, 96-116, 119-139, and 158-178; these read MSAI…GLWI, VYGV…VGHF, FGLI…FFSS, FAIL…KLFA, LPII…LGAA, and MGYA…MWLI. 2 consecutive RCK C-terminal domains span residues 192-276 and 279-361; these read EFDS…VVGE and DVTL…VVGN. 6 helical membrane passes run 371-391, 393-413, 439-459, 464-484, 493-513, and 530-550; these read MLPV…PLFI, GFPA…ALIL, IVLF…NTLV, LAWI…VGIL, YLTL…LAFA, and VYPL…VLFW.

The protein belongs to the AAE transporter (TC 2.A.81) family. YidE subfamily.

The protein resides in the cell membrane. The polypeptide is Putative transport protein YE4162 (Yersinia enterocolitica serotype O:8 / biotype 1B (strain NCTC 13174 / 8081)).